We begin with the raw amino-acid sequence, 196 residues long: Purpurin (196 aa).

The signal sequence occupies residues 1–21 (MKYAQYVFLASIFSAVEYSLA). 3 disulfides stabilise this stretch: Cys-24–Cys-182, Cys-90–Cys-196, and Cys-142–Cys-151.

This sequence belongs to the calycin superfamily. Lipocalin family.

Its subcellular location is the secreted. The protein localises to the extracellular space. The protein resides in the extracellular matrix. It is found in the interphotoreceptor matrix. Functionally, may be involved in the transport of retinol between the photoreceptors and the pigmented epithelium. The polypeptide is Purpurin (Gallus gallus (Chicken)).